A 380-amino-acid polypeptide reads, in one-letter code: Lipid-A-disaccharide synthase (380 aa).

The protein belongs to the LpxB family.

It carries out the reaction a lipid X + a UDP-2-N,3-O-bis[(3R)-3-hydroxyacyl]-alpha-D-glucosamine = a lipid A disaccharide + UDP + H(+). It participates in bacterial outer membrane biogenesis; LPS lipid A biosynthesis. Its function is as follows. Condensation of UDP-2,3-diacylglucosamine and 2,3-diacylglucosamine-1-phosphate to form lipid A disaccharide, a precursor of lipid A, a phosphorylated glycolipid that anchors the lipopolysaccharide to the outer membrane of the cell. The protein is Lipid-A-disaccharide synthase of Vibrio vulnificus (strain CMCP6).